A 471-amino-acid chain; its full sequence is 3-isopropylmalate dehydratase large subunit (471 aa).

The [4Fe-4S] cluster site is built by Cys347, Cys407, and Cys410.

Belongs to the aconitase/IPM isomerase family. LeuC type 1 subfamily. Heterodimer of LeuC and LeuD. The cofactor is [4Fe-4S] cluster.

The enzyme catalyses (2R,3S)-3-isopropylmalate = (2S)-2-isopropylmalate. It participates in amino-acid biosynthesis; L-leucine biosynthesis; L-leucine from 3-methyl-2-oxobutanoate: step 2/4. Functionally, catalyzes the isomerization between 2-isopropylmalate and 3-isopropylmalate, via the formation of 2-isopropylmaleate. This Buchnera aphidicola subsp. Baizongia pistaciae (strain Bp) protein is 3-isopropylmalate dehydratase large subunit.